The following is a 51-amino-acid chain: uncharacterized protein (51 aa).

This is an uncharacterized protein from Escherichia coli (strain K12).